Reading from the N-terminus, the 435-residue chain is 5-methylthioadenosine/S-adenosylhomocysteine deaminase (435 aa).

The Zn(2+) site is built by histidine 65 and histidine 67. Positions 94, 150, and 189 each coordinate substrate. Histidine 216 serves as a coordination point for Zn(2+). Substrate-binding residues include glutamate 219 and aspartate 304. A Zn(2+)-binding site is contributed by aspartate 304.

Belongs to the metallo-dependent hydrolases superfamily. MTA/SAH deaminase family. Requires Zn(2+) as cofactor.

The catalysed reaction is S-adenosyl-L-homocysteine + H2O + H(+) = S-inosyl-L-homocysteine + NH4(+). The enzyme catalyses S-methyl-5'-thioadenosine + H2O + H(+) = S-methyl-5'-thioinosine + NH4(+). Its function is as follows. Catalyzes the deamination of 5-methylthioadenosine and S-adenosyl-L-homocysteine into 5-methylthioinosine and S-inosyl-L-homocysteine, respectively. Is also able to deaminate adenosine. This chain is 5-methylthioadenosine/S-adenosylhomocysteine deaminase, found in Bacillus cereus (strain B4264).